Reading from the N-terminus, the 494-residue chain is Aldehyde dehydrogenase (494 aa).

223–228 (GSTTAG) provides a ligand contact to NAD(+). Active-site residues include glutamate 245 and cysteine 279.

Belongs to the aldehyde dehydrogenase family.

The catalysed reaction is an aldehyde + NAD(+) + H2O = a carboxylate + NADH + 2 H(+). The protein operates within mycotoxin biosynthesis. Its function is as follows. Aldehyde dehydrogenase; part of the gene cluster that mediates the biosynthesis of the selective antifungal agent ascochitine, an o-quinone methide that plays a possible protective role against other microbial competitors in nature and is considered to be important for pathogenicity of legume-associated Didymella species. The pathway probably begins with the synthesis of a keto-aldehyde intermediate by the ascochitine non-reducing polyketide synthase pksAC from successive condensations of 4 malonyl-CoA units, presumably with a simple acetyl-CoA starter unit. Release of the keto-aldehyde intermediate is consistent with the presence of the C-terminal reductive release domain. The HR-PKS (orf7) probably makes a diketide starter unit which is passed to the non-reducing polyketide synthase pksAC for further extension, producing ascochital and ascochitine. The aldehyde dehydrogenase (orf1), the 2-oxoglutarate-dependent dioxygenase (orf3) and the dehydrogenase (orf9) are probably involved in subsequent oxidations of methyl groups to the carboxylic acid of the heterocyclic ring. The ascochitine gene cluster also includes a gene encoding a short peptide with a cupin domain (orf2) that is often found in secondary metabolite gene clusters and which function has still to be determined. This is Aldehyde dehydrogenase from Didymella fabae (Leaf and pod spot disease fungus).